The following is a 123-amino-acid chain: Immunoglobulin lambda variable 5-37 (123 aa).

The signal sequence occupies residues 1–19 (MAWTPLLLLLLSHCTGSLS). Residues 20–44 (QPVLTQPPSSSASPGESARLTCTLP) are framework-1. One can recognise an Ig-like domain in the interval 21–123 (PVLTQPPSSS…YCMIWPSNAS (103 aa)). C41 and C115 are oxidised to a cystine. The complementarity-determining-1 stretch occupies residues 45 to 53 (SDINVGSYN). A framework-2 region spans residues 54–70 (IYWYQQKPGSPPRYLLY). The tract at residues 71 to 77 (YYSDSDK) is complementarity-determining-2. A framework-3 region spans residues 78–115 (GQGSGVPSRFSGSKDASANTGILLISGLQSEDEADYYC). The complementarity-determining-3 stretch occupies residues 116-123 (MIWPSNAS).

As to quaternary structure, immunoglobulins are composed of two identical heavy chains and two identical light chains; disulfide-linked.

Its subcellular location is the secreted. It is found in the cell membrane. Functionally, v region of the variable domain of immunoglobulin light chains that participates in the antigen recognition. Immunoglobulins, also known as antibodies, are membrane-bound or secreted glycoproteins produced by B lymphocytes. In the recognition phase of humoral immunity, the membrane-bound immunoglobulins serve as receptors which, upon binding of a specific antigen, trigger the clonal expansion and differentiation of B lymphocytes into immunoglobulins-secreting plasma cells. Secreted immunoglobulins mediate the effector phase of humoral immunity, which results in the elimination of bound antigens. The antigen binding site is formed by the variable domain of one heavy chain, together with that of its associated light chain. Thus, each immunoglobulin has two antigen binding sites with remarkable affinity for a particular antigen. The variable domains are assembled by a process called V-(D)-J rearrangement and can then be subjected to somatic hypermutations which, after exposure to antigen and selection, allow affinity maturation for a particular antigen. This Homo sapiens (Human) protein is Immunoglobulin lambda variable 5-37.